The following is a 1342-amino-acid chain: Cytokinesis protein sepH (1342 aa).

A compositionally biased stretch (low complexity) spans 1–10 (MVSRSSEGAE). The segment at 1–47 (MVSRSSEGAEGPPPSAPKPPNTPAKSRLSRLGSSPSKREDKSRDDRM) is disordered. Over residues 11–22 (GPPPSAPKPPNT) the composition is skewed to pro residues. Basic and acidic residues predominate over residues 36–47 (SKREDKSRDDRM). The Protein kinase domain occupies 61–308 (YQLGDCLGKG…ARKLLKHPWI (248 aa)). ATP is bound by residues 67–75 (LGKGAFGSV) and Lys-90. Asp-180 functions as the Proton acceptor in the catalytic mechanism. 3 disordered regions span residues 336 to 396 (NEAL…EEDN), 441 to 486 (IKSD…QLQE), and 552 to 591 (ADENVDPFESSPSKEAIRNRASAEDVMGQQPQLRKQISVK). Residues 369 to 379 (KDTLPSPVSRN) show a composition bias toward polar residues. Residues 658–695 (FAQLEEGLDEMDLEANIARDKHARLRNQVEGLVSSLKT) are a coiled coil. A disordered region spans residues 1201–1342 (SEAYGMGKRK…QTQADADWTP (142 aa)). Residues 1207 to 1217 (GKRKPMVRRRS) show a composition bias toward basic residues. 2 stretches are compositionally biased toward polar residues: residues 1218–1244 (TSATPPNLLANQSAPSTPQMNRTSQSK) and 1273–1290 (DGSTPSLTAGLNGSTGAS). Low complexity predominate over residues 1315-1324 (RPSSSLSRRQ).

This sequence belongs to the protein kinase superfamily. Ser/Thr protein kinase family. CDC7 subfamily. Requires Mg(2+) as cofactor.

The enzyme catalyses L-seryl-[protein] + ATP = O-phospho-L-seryl-[protein] + ADP + H(+). It carries out the reaction L-threonyl-[protein] + ATP = O-phospho-L-threonyl-[protein] + ADP + H(+). In terms of biological role, required for early events during cytokinesis including localization of cytoskeletal components to the cytokinetic ring. The chain is Cytokinesis protein sepH from Aspergillus terreus (strain NIH 2624 / FGSC A1156).